The sequence spans 418 residues: Glutamyl-tRNA reductase (418 aa).

Substrate contacts are provided by residues 49-52 (TCNR), S109, 114-116 (EPQ), and Q120. The Nucleophile role is filled by C50. 189–194 (GAGETI) is a binding site for NADP(+).

Belongs to the glutamyl-tRNA reductase family. In terms of assembly, homodimer.

It catalyses the reaction (S)-4-amino-5-oxopentanoate + tRNA(Glu) + NADP(+) = L-glutamyl-tRNA(Glu) + NADPH + H(+). The protein operates within porphyrin-containing compound metabolism; protoporphyrin-IX biosynthesis; 5-aminolevulinate from L-glutamyl-tRNA(Glu): step 1/2. In terms of biological role, catalyzes the NADPH-dependent reduction of glutamyl-tRNA(Glu) to glutamate 1-semialdehyde (GSA). In Salmonella dublin (strain CT_02021853), this protein is Glutamyl-tRNA reductase.